The sequence spans 406 residues: Succinylornithine transaminase (406 aa).

K252 is subject to N6-(pyridoxal phosphate)lysine.

Belongs to the class-III pyridoxal-phosphate-dependent aminotransferase family. AstC subfamily. Requires pyridoxal 5'-phosphate as cofactor.

It catalyses the reaction N(2)-succinyl-L-ornithine + 2-oxoglutarate = N-succinyl-L-glutamate 5-semialdehyde + L-glutamate. It functions in the pathway amino-acid degradation; L-arginine degradation via AST pathway; L-glutamate and succinate from L-arginine: step 3/5. Catalyzes the transamination of N(2)-succinylornithine and alpha-ketoglutarate into N(2)-succinylglutamate semialdehyde and glutamate. Can also act as an acetylornithine aminotransferase. The protein is Succinylornithine transaminase of Escherichia fergusonii (strain ATCC 35469 / DSM 13698 / CCUG 18766 / IAM 14443 / JCM 21226 / LMG 7866 / NBRC 102419 / NCTC 12128 / CDC 0568-73).